The primary structure comprises 396 residues: Acetate kinase (396 aa).

Residue Asn-7 coordinates Mg(2+). Lys-14 lines the ATP pocket. Arg-91 provides a ligand contact to substrate. The Proton donor/acceptor role is filled by Asp-148. ATP contacts are provided by residues 208–212, 283–285, and 331–335; these read HLGNG, DFR, and GIGEN. Glu-384 contacts Mg(2+).

It belongs to the acetokinase family. As to quaternary structure, homodimer. Mg(2+) is required as a cofactor. Requires Mn(2+) as cofactor.

It is found in the cytoplasm. The enzyme catalyses acetate + ATP = acetyl phosphate + ADP. It functions in the pathway metabolic intermediate biosynthesis; acetyl-CoA biosynthesis; acetyl-CoA from acetate: step 1/2. Catalyzes the formation of acetyl phosphate from acetate and ATP. Can also catalyze the reverse reaction. The polypeptide is Acetate kinase (Desulforamulus reducens (strain ATCC BAA-1160 / DSM 100696 / MI-1) (Desulfotomaculum reducens)).